Here is a 178-residue protein sequence, read N- to C-terminus: MTTLRAFTCDDLFRFNNINLDPLTETYGIPFYLQYLAHWPEYFIVAEAPGGELMGYIMGKAEGSVAREEWHGHVTALSVAPEFRRLGLAAKLMELLEEISERKGGFFVDLFVRVSNQVAVNMYKQLGYSVYRTVIEYYSASNGEPDEDAYDMRKALSRDTEKKSIIPLPHPVRPEDIE.

One can recognise an N-acetyltransferase domain in the interval 2–157; sequence TTLRAFTCDD…DAYDMRKALS (156 aa).

It belongs to the acetyltransferase family. ARD1 subfamily. In terms of assembly, component of the N-terminal acetyltransferase B (NatB) complex which is composed of NAA20 and NAA25.

It is found in the cytoplasm. The protein localises to the nucleus. It catalyses the reaction N-terminal L-methionyl-L-asparaginyl-[protein] + acetyl-CoA = N-terminal N(alpha)-acetyl-L-methionyl-L-asparaginyl-[protein] + CoA + H(+). The catalysed reaction is N-terminal L-methionyl-L-glutaminyl-[protein] + acetyl-CoA = N-terminal N(alpha)-acetyl-L-methionyl-L-glutaminyl-[protein] + CoA + H(+). It carries out the reaction N-terminal L-methionyl-L-aspartyl-[protein] + acetyl-CoA = N-terminal N(alpha)-acetyl-L-methionyl-L-aspartyl-[protein] + CoA + H(+). The enzyme catalyses N-terminal L-methionyl-L-glutamyl-[protein] + acetyl-CoA = N-terminal N(alpha)-acetyl-L-methionyl-L-glutamyl-[protein] + CoA + H(+). Its function is as follows. Catalytic subunit of the NatB complex which catalyzes acetylation of the N-terminal methionine residues of peptides beginning with Met-Asp, Met-Glu, Met-Asn and Met-Gln. Proteins with cell cycle functions are overrepresented in the pool of NatB substrates. Required for maintaining the structure and function of actomyosin fibers and for proper cellular migration. In Homo sapiens (Human), this protein is N-alpha-acetyltransferase 20 (NAA20).